The primary structure comprises 278 residues: Tumor necrosis factor ligand superfamily member 6 (278 aa).

Topologically, residues 1–77 are cytoplasmic; it reads MQQPVNYPCP…SPLKKKDNIE (77 aa). Residues 26–68 are disordered; that stretch reads PGSVFSCPSSGPRGPGQRRPPPPPPPPSPLPPPSQPPPLPPLS. Residues 33–42 are compositionally biased toward low complexity; it reads PSSGPRGPGQ. Residues 43–68 show a composition bias toward pro residues; sequence RRPPPPPPPPSPLPPPSQPPPLPPLS. The helical; Signal-anchor for type II membrane protein transmembrane segment at 78–99 threads the bilayer; that stretch reads LWLPVIFFMVLVALVGMGLGMY. Residues 100–278 lie on the Extracellular side of the membrane; the sequence is QLFHLQKELA…SKTFFGLYKL (179 aa). Asn116 carries N-linked (GlcNAc...) asparagine glycosylation. Residues 125–135 show a composition bias toward polar residues; it reads EKQIANPSTPS. The disordered stretch occupies residues 125-147; sequence EKQIANPSTPSETKKPRSVAHLT. Residues 142–278 enclose the THD domain; sequence SVAHLTGNPR…SKTFFGLYKL (137 aa). Cys199 and Cys230 are oxidised to a cystine. Residues Asn247 and Asn257 are each glycosylated (N-linked (GlcNAc...) asparagine).

The protein belongs to the tumor necrosis factor family. Homotrimer. Interacts with ARHGAP9, BAIAP2L1, BTK, CACNB3, CACNB4, CRK, DLG2, DNMBP, DOCK4, EPS8L3, FGR, FYB1, FYN, HCK, ITK, ITSN2, KALRN, LYN, MACC1, MIA, MPP4, MYO15A, NCF1, NCK1, NCK2, NCKIPSD, OSTF1, PIK3R1, PSTPIP1, RIMBP3C, SAMSN1, SH3GL3, SH3PXD2B, SH3PXD2A, SH3RF2, SKAP2, SNX33, SNX9, SORBS3, SPTA1, SRC, SRGAP1, SRGAP2, SRGAP3, TEC, TJP3 and YES1. Post-translationally, the soluble form derives from the membrane form by proteolytic processing. The membrane-bound form undergoes two successive intramembrane proteolytic cleavages. The first one is processed by ADAM10 producing an N-terminal fragment, which lacks the receptor-binding extracellular domain. This ADAM10-processed FasL (FasL APL) remnant form is still membrane anchored and further processed by SPPL2A that liberates the FasL intracellular domain (FasL ICD). FasL shedding by ADAM10 is a prerequisite for subsequent intramembrane cleavage by SPPL2A in T-cells. In terms of processing, phosphorylated by FGR on tyrosine residues; this is required for ubiquitination and subsequent internalization. N-glycosylated. Post-translationally, monoubiquitinated. As to expression, expressed in activated splenocytes and thymocytes. Moderate or weak expression found in small intestines, kidney and lung.

It localises to the cell membrane. The protein localises to the cytoplasmic vesicle lumen. Its subcellular location is the lysosome lumen. It is found in the secreted. The protein resides in the nucleus. Its function is as follows. Cytokine that binds to TNFRSF6/FAS, a receptor that transduces the apoptotic signal into cells. Involved in cytotoxic T-cell-mediated apoptosis, natural killer cell-mediated apoptosis and in T-cell development. Initiates fratricidal/suicidal activation-induced cell death (AICD) in antigen-activated T-cells contributing to the termination of immune responses. TNFRSF6/FAS-mediated apoptosis also has a role in the induction of peripheral tolerance. Binds to TNFRSF6B/DcR3, a decoy receptor that blocks apoptosis. Functionally, induces FAS-mediated activation of NF-kappa-B, initiating non-apoptotic signaling pathways. Can induce apoptosis but does not appear to be essential for this process. Cytoplasmic form induces gene transcription inhibition. This is Tumor necrosis factor ligand superfamily member 6 (Faslg) from Rattus norvegicus (Rat).